Here is a 411-residue protein sequence, read N- to C-terminus: Metacaspase-1B (411 aa).

The interval 1–97 is disordered; that stretch reads MYHRHSAPPP…PPLEAQQFGN (97 aa). Positions 7–65 are enriched in pro residues; it reads APPPPGRSRGYPPPQQQWPPQPYQYLPYPPQGPPPAHTFPPPAHRSYPSPYPTPPPHSP. Catalysis depends on residues histidine 198 and cysteine 254.

Belongs to the peptidase C14B family.

Its function is as follows. Involved in cell death (apoptosis). This chain is Metacaspase-1B (casB), found in Neosartorya fischeri (strain ATCC 1020 / DSM 3700 / CBS 544.65 / FGSC A1164 / JCM 1740 / NRRL 181 / WB 181) (Aspergillus fischerianus).